Consider the following 505-residue polypeptide: Deoxyguanosinetriphosphate triphosphohydrolase (505 aa).

Positions 66–273 (RLTHSMEVQQ…MEAADDISYC (208 aa)) constitute an HD domain.

The protein belongs to the dGTPase family. Type 1 subfamily. As to quaternary structure, homotetramer. The cofactor is Mg(2+).

It carries out the reaction dGTP + H2O = 2'-deoxyguanosine + triphosphate + H(+). Functionally, dGTPase preferentially hydrolyzes dGTP over the other canonical NTPs. The protein is Deoxyguanosinetriphosphate triphosphohydrolase of Escherichia coli O127:H6 (strain E2348/69 / EPEC).